The primary structure comprises 67 residues: ATP synthase F(0) complex subunit 8 (67 aa).

A helical membrane pass occupies residues threonine 8–methionine 24. An N6-acetyllysine; alternate modification is found at lysine 54. At lysine 54 the chain carries N6-succinyllysine; alternate. Lysine 57 is subject to N6-acetyllysine.

This sequence belongs to the ATPase protein 8 family. In terms of assembly, component of the ATP synthase complex composed at least of ATP5F1A/subunit alpha, ATP5F1B/subunit beta, ATP5MC1/subunit c (homooctomer), MT-ATP6/subunit a, MT-ATP8/subunit 8, ATP5ME/subunit e, ATP5MF/subunit f, ATP5MG/subunit g, ATP5MK/subunit k, ATP5MJ/subunit j, ATP5F1C/subunit gamma, ATP5F1D/subunit delta, ATP5F1E/subunit epsilon, ATP5PF/subunit F6, ATP5PB/subunit b, ATP5PD/subunit d, ATP5PO/subunit OSCP. ATP synthase complex consists of a soluble F(1) head domain (subunits alpha(3) and beta(3)) - the catalytic core - and a membrane F(0) domain - the membrane proton channel (subunits c, a, 8, e, f, g, k and j). These two domains are linked by a central stalk (subunits gamma, delta, and epsilon) rotating inside the F1 region and a stationary peripheral stalk (subunits F6, b, d, and OSCP). Interacts with PRICKLE3.

It localises to the mitochondrion membrane. In terms of biological role, subunit 8, of the mitochondrial membrane ATP synthase complex (F(1)F(0) ATP synthase or Complex V) that produces ATP from ADP in the presence of a proton gradient across the membrane which is generated by electron transport complexes of the respiratory chain. ATP synthase complex consist of a soluble F(1) head domain - the catalytic core - and a membrane F(1) domain - the membrane proton channel. These two domains are linked by a central stalk rotating inside the F(1) region and a stationary peripheral stalk. During catalysis, ATP synthesis in the catalytic domain of F(1) is coupled via a rotary mechanism of the central stalk subunits to proton translocation. In vivo, can only synthesize ATP although its ATP hydrolase activity can be activated artificially in vitro. Part of the complex F(0) domain. The polypeptide is ATP synthase F(0) complex subunit 8 (Cricetulus griseus (Chinese hamster)).